Here is a 594-residue protein sequence, read N- to C-terminus: UvrABC system protein C (594 aa).

One can recognise a GIY-YIG domain in the interval 14-91 (DKPGCYLMKD…IKKHDPKYNV (78 aa)). Residues 196–231 (SDIKEQLRERMEKAAEDLDFERAKELRDTIAQMEKV) enclose the UVR domain.

Belongs to the UvrC family. As to quaternary structure, interacts with UvrB in an incision complex.

The protein localises to the cytoplasm. Functionally, the UvrABC repair system catalyzes the recognition and processing of DNA lesions. UvrC both incises the 5' and 3' sides of the lesion. The N-terminal half is responsible for the 3' incision and the C-terminal half is responsible for the 5' incision. This is UvrABC system protein C from Shouchella clausii (strain KSM-K16) (Alkalihalobacillus clausii).